The following is a 123-amino-acid chain: WAP four-disulfide core domain protein 5 (123 aa).

Positions 1 to 24 are cleaved as a signal peptide; that stretch reads MRTQSLLLLGALLAVGSQLPAVFG. 2 WAP domains span residues 27–74 and 75–121; these read KGEK…VPRV and SVKL…RDPA. 8 disulfides stabilise this stretch: Cys-34–Cys-62, Cys-41–Cys-66, Cys-49–Cys-61, Cys-55–Cys-70, Cys-81–Cys-109, Cys-88–Cys-113, Cys-96–Cys-108, and Cys-102–Cys-117.

It is found in the secreted. Putative acid-stable proteinase inhibitor. In Gorilla gorilla gorilla (Western lowland gorilla), this protein is WAP four-disulfide core domain protein 5 (WFDC5).